Consider the following 308-residue polypeptide: Cytochrome b (308 aa).

4 helical membrane-spanning segments follow: residues 1–21 (FGLL…LLAA), 45–66 (WLIR…YLHI), 81–101 (WNIG…GYVL), and 146–166 (FFAL…VHLT). Residues His-51 and His-65 each contribute to the heme b site. The heme b site is built by His-150 and His-164. His-169 serves as a coordination point for a ubiquinone. 3 consecutive transmembrane segments (helical) span residues 194 to 214 (TKDM…ALFS), 256 to 276 (LGGV…PLLH), and 288 to 308 (LSQI…WVGS).

It belongs to the cytochrome b family. As to quaternary structure, the cytochrome bc1 complex contains 11 subunits: 3 respiratory subunits (MT-CYB, CYC1 and UQCRFS1), 2 core proteins (UQCRC1 and UQCRC2) and 6 low-molecular weight proteins (UQCRH/QCR6, UQCRB/QCR7, UQCRQ/QCR8, UQCR10/QCR9, UQCR11/QCR10 and a cleavage product of UQCRFS1). This cytochrome bc1 complex then forms a dimer. Requires heme b as cofactor.

Its subcellular location is the mitochondrion inner membrane. Functionally, component of the ubiquinol-cytochrome c reductase complex (complex III or cytochrome b-c1 complex) that is part of the mitochondrial respiratory chain. The b-c1 complex mediates electron transfer from ubiquinol to cytochrome c. Contributes to the generation of a proton gradient across the mitochondrial membrane that is then used for ATP synthesis. The polypeptide is Cytochrome b (MT-CYB) (Pomatostomus temporalis (Grey-crowned babbler)).